Here is a 265-residue protein sequence, read N- to C-terminus: Speedy protein E13 (265 aa).

Residues 1–80 form a disordered region; it reads MGQILGKIMM…EPEKELAPEP (80 aa). Acidic residues predominate over residues 66–80; that stretch reads DESDDEPEKELAPEP.

Belongs to the Speedy/Ringo family.

This chain is Speedy protein E13, found in Homo sapiens (Human).